The primary structure comprises 335 residues: S-adenosylmethionine decarboxylase proenzyme (335 aa).

Active-site residues include Glu12 and Glu15. The Schiff-base intermediate with substrate; via pyruvic acid role is filled by Ser70. A Pyruvic acid (Ser); by autocatalysis modification is found at Ser70. The active-site Proton donor; for catalytic activity is the Cys84. Residues Ser231 and His245 each act as proton acceptor; for processing activity in the active site.

Belongs to the eukaryotic AdoMetDC family. Pyruvate serves as cofactor. Is synthesized initially as an inactive proenzyme. Formation of the active enzyme involves a self-maturation process in which the active site pyruvoyl group is generated from an internal serine residue via an autocatalytic post-translational modification. Two non-identical subunits are generated from the proenzyme in this reaction, and the pyruvate is formed at the N-terminus of the alpha chain, which is derived from the carboxyl end of the proenzyme. The post-translation cleavage follows an unusual pathway, termed non-hydrolytic serinolysis, in which the side chain hydroxyl group of the serine supplies its oxygen atom to form the C-terminus of the beta chain, while the remainder of the serine residue undergoes an oxidative deamination to produce ammonia and the pyruvoyl group blocking the N-terminus of the alpha chain.

It catalyses the reaction S-adenosyl-L-methionine + H(+) = S-adenosyl 3-(methylsulfanyl)propylamine + CO2. It functions in the pathway amine and polyamine biosynthesis; S-adenosylmethioninamine biosynthesis; S-adenosylmethioninamine from S-adenosyl-L-methionine: step 1/1. Its function is as follows. Essential for biosynthesis of the polyamines spermidine and spermine. Promotes maintenance and self-renewal of embryonic stem cells, by maintaining spermine levels. The polypeptide is S-adenosylmethionine decarboxylase proenzyme (amd1) (Xenopus laevis (African clawed frog)).